A 464-amino-acid polypeptide reads, in one-letter code: Mitogen-activated protein kinase 10 (464 aa).

The Protein kinase domain maps to 64 to 359 (YQNLKPIGSG…VDDALQHPYI (296 aa)). ATP-binding positions include 70-78 (IGSGAQGIV) and lysine 93. The Proton acceptor role is filled by aspartate 189. Threonine 221 is subject to Phosphothreonine; by MAP2K7. The TXY signature appears at 221–223 (TPY). Position 223 is a phosphotyrosine; by MAP2K4 (tyrosine 223). Residues 405-464 (TKNGVVKGQPSPSGAAVNSSESLPPSSSVNDISSMSTDQTLASDTDSSLEASAGPLGCCR) are disordered. The segment covering 423 to 432 (SSESLPPSSS) has biased composition (low complexity). Residues 433-454 (VNDISSMSTDQTLASDTDSSLE) are compositionally biased toward polar residues. Residues cysteine 462 and cysteine 463 are each lipidated (S-palmitoyl cysteine).

Belongs to the protein kinase superfamily. CMGC Ser/Thr protein kinase family. MAP kinase subfamily. Interacts with MAPKBP1. Interacts with MAPK8IP1/JIP-1 and MAPK8IP3/JIP-3/JSAP1. Interacts with SPAG9/MAPK8IP4/JIP4. Interacts with HDAC9. Interacts with ARRB2; the interaction enhances MAPK10 activation by MAP3K5. Interacts with SARM1. Interacts with JUND; interaction is inhibited in the presence of MEN1. Requires Mg(2+) as cofactor. Post-translationally, dually phosphorylated on Thr-221 and Tyr-223 by MAP2K4 and MAP2K7, which activates the enzyme. MAP2K7 shows a strong preference for Thr-221 while MAP2K4 phosphorylates Tyr-223 preferentially. Weakly autophosphorylated on threonine and tyrosine residues in vitro. In terms of processing, palmitoylation regulates subcellular location and axonal development. Specific to a subset of neurons in the nervous system. Present in the hippocampus and areas, cerebellum, striatum, brain stem, and weakly in the spinal cord. Very weak expression in testis and kidney.

It localises to the cytoplasm. The protein resides in the membrane. The protein localises to the nucleus. Its subcellular location is the mitochondrion. The enzyme catalyses L-seryl-[protein] + ATP = O-phospho-L-seryl-[protein] + ADP + H(+). It carries out the reaction L-threonyl-[protein] + ATP = O-phospho-L-threonyl-[protein] + ADP + H(+). Activated by threonine and tyrosine phosphorylation by two dual specificity kinases, MAP2K4 and MAP2K7. MAP2K7 phosphorylates MAPK10 on Thr-221 causing a conformational change and a large increase in Vmax. MAP2K4 then phosphorylates Tyr-223 resulting in a further increase in Vmax. Inhibited by dual specificity phosphatases, such as DUSP1. Inhibited by HDAC9. Its function is as follows. Serine/threonine-protein kinase involved in various processes such as neuronal proliferation, differentiation, migration and programmed cell death. Extracellular stimuli such as pro-inflammatory cytokines or physical stress stimulate the stress-activated protein kinase/c-Jun N-terminal kinase (SAP/JNK) signaling pathway. In this cascade, two dual specificity kinases MAP2K4/MKK4 and MAP2K7/MKK7 phosphorylate and activate MAPK10/JNK3. In turn, MAPK10/JNK3 phosphorylates a number of transcription factors, primarily components of AP-1 such as JUN and ATF2 and thus regulates AP-1 transcriptional activity. Plays regulatory roles in the signaling pathways during neuronal apoptosis. Phosphorylates the neuronal microtubule regulator STMN2. Acts in the regulation of the amyloid-beta precursor protein/APP signaling during neuronal differentiation by phosphorylating APP. Also participates in neurite growth in spiral ganglion neurons. Phosphorylates the CLOCK-BMAL1 heterodimer and plays a role in the photic regulation of the circadian clock. Phosphorylates JUND and this phosphorylation is inhibited in the presence of MEN1. The chain is Mitogen-activated protein kinase 10 (MAPK10) from Homo sapiens (Human).